The chain runs to 235 residues: Ribonuclease 3 (235 aa).

The RNase III domain occupies 7-131; sequence LSALEARIGH…IIGAVFLDGG (125 aa). A Mg(2+)-binding site is contributed by E45. D49 is a catalytic residue. Mg(2+)-binding residues include D117 and E120. The active site involves E120. The DRBM domain maps to 156-225; that stretch reads DPKTTLQEWA…AAAFLTREKI (70 aa).

The protein belongs to the ribonuclease III family. Homodimer. It depends on Mg(2+) as a cofactor.

It is found in the cytoplasm. It catalyses the reaction Endonucleolytic cleavage to 5'-phosphomonoester.. Functionally, digests double-stranded RNA. Involved in the processing of primary rRNA transcript to yield the immediate precursors to the large and small rRNAs (23S and 16S). Processes some mRNAs, and tRNAs when they are encoded in the rRNA operon. Processes pre-crRNA and tracrRNA of type II CRISPR loci if present in the organism. This Methylocella silvestris (strain DSM 15510 / CIP 108128 / LMG 27833 / NCIMB 13906 / BL2) protein is Ribonuclease 3.